The following is a 360-amino-acid chain: Protein Wnt-2 (360 aa).

A signal peptide spans 1–25 (MNAPLCGIWLWLPLLLTWLTPEVSS). Disulfide bonds link Cys-76–Cys-87, Cys-127–Cys-135, Cys-137–Cys-157, Cys-206–Cys-220, Cys-208–Cys-215, Cys-278–Cys-309, Cys-294–Cys-304, Cys-308–Cys-348, Cys-324–Cys-339, Cys-326–Cys-336, and Cys-331–Cys-332. A lipid anchor (O-palmitoleoyl serine; by PORCN) is attached at Ser-212. N-linked (GlcNAc...) asparagine glycosylation occurs at Asn-295.

Belongs to the Wnt family. In terms of processing, palmitoleoylation is required for efficient binding to frizzled receptors. Depalmitoleoylation leads to Wnt signaling pathway inhibition.

It is found in the secreted. It localises to the extracellular space. The protein localises to the extracellular matrix. Its function is as follows. Ligand for members of the frizzled family of seven transmembrane receptors. Functions in the canonical Wnt signaling pathway that results in activation of transcription factors of the TCF/LEF family. Functions as a upstream regulator of FGF10 expression. Plays an important role in embryonic lung development. May contribute to embryonic brain development by regulating the proliferation of dopaminergic precursors and neurons. This Otolemur garnettii (Small-eared galago) protein is Protein Wnt-2 (WNT2).